A 438-amino-acid polypeptide reads, in one-letter code: uncharacterized protein (438 aa).

A Zn(2+)-binding site is contributed by His-59. Catalysis depends on Glu-62, which acts as the Proton acceptor. The Zn(2+) site is built by His-63 and Glu-139.

The protein belongs to the peptidase M16 family. Requires Zn(2+) as cofactor.

This is an uncharacterized protein from Mycobacterium bovis (strain ATCC BAA-935 / AF2122/97).